Here is a 360-residue protein sequence, read N- to C-terminus: Glutamate 5-kinase (360 aa).

An ATP-binding site is contributed by Lys-11. Substrate is bound by residues Ser-51, Asp-138, and Asn-150. Residues Lys-278 to Tyr-356 enclose the PUA domain.

This sequence belongs to the glutamate 5-kinase family.

It localises to the cytoplasm. The enzyme catalyses L-glutamate + ATP = L-glutamyl 5-phosphate + ADP. It participates in amino-acid biosynthesis; L-proline biosynthesis; L-glutamate 5-semialdehyde from L-glutamate: step 1/2. Functionally, catalyzes the transfer of a phosphate group to glutamate to form L-glutamate 5-phosphate. The sequence is that of Glutamate 5-kinase from Bacteroides thetaiotaomicron (strain ATCC 29148 / DSM 2079 / JCM 5827 / CCUG 10774 / NCTC 10582 / VPI-5482 / E50).